Consider the following 85-residue polypeptide: Large ribosomal subunit protein bL27 (85 aa).

Positions 1–21 (MAHKKGGGSTKNGRDSNPKYL) are disordered.

The protein belongs to the bacterial ribosomal protein bL27 family.

The chain is Large ribosomal subunit protein bL27 from Chlorobium chlorochromatii (strain CaD3).